Consider the following 422-residue polypeptide: Phosphoribosylamine--glycine ligase (422 aa).

An ATP-grasp domain is found at 107-312; sequence KDVMAAAGVR…LGQLLHAAAT (206 aa). 137-193 is an ATP binding site; the sequence is GPPAGDPAWVVKDDRLAAGKGVVVTADRDVARAHGAALLEAGHPVLLESYLDGPEVS. Mg(2+)-binding residues include E282 and N284.

The protein belongs to the GARS family. Mg(2+) is required as a cofactor. It depends on Mn(2+) as a cofactor.

The enzyme catalyses 5-phospho-beta-D-ribosylamine + glycine + ATP = N(1)-(5-phospho-beta-D-ribosyl)glycinamide + ADP + phosphate + H(+). The protein operates within purine metabolism; IMP biosynthesis via de novo pathway; N(1)-(5-phospho-D-ribosyl)glycinamide from 5-phospho-alpha-D-ribose 1-diphosphate: step 2/2. In Mycobacterium bovis (strain ATCC BAA-935 / AF2122/97), this protein is Phosphoribosylamine--glycine ligase.